Here is a 357-residue protein sequence, read N- to C-terminus: tRNA/tmRNA (uracil-C(5))-methyltransferase (357 aa).

Positions 185, 212, 217, 233, and 291 each coordinate S-adenosyl-L-methionine. Cys316 acts as the Nucleophile in catalysis. The Proton acceptor role is filled by Glu350.

Belongs to the class I-like SAM-binding methyltransferase superfamily. RNA M5U methyltransferase family. TrmA subfamily.

The enzyme catalyses uridine(54) in tRNA + S-adenosyl-L-methionine = 5-methyluridine(54) in tRNA + S-adenosyl-L-homocysteine + H(+). The catalysed reaction is uridine(341) in tmRNA + S-adenosyl-L-methionine = 5-methyluridine(341) in tmRNA + S-adenosyl-L-homocysteine + H(+). Functionally, dual-specificity methyltransferase that catalyzes the formation of 5-methyluridine at position 54 (m5U54) in all tRNAs, and that of position 341 (m5U341) in tmRNA (transfer-mRNA). This Campylobacter hominis (strain ATCC BAA-381 / DSM 21671 / CCUG 45161 / LMG 19568 / NCTC 13146 / CH001A) protein is tRNA/tmRNA (uracil-C(5))-methyltransferase.